A 308-amino-acid chain; its full sequence is Ribosomal RNA small subunit methyltransferase H (308 aa).

Residues 33–35 (GGH), D52, F78, D99, and Q106 each bind S-adenosyl-L-methionine. The interval 289–308 (EEIETNSRSRSAKLRVAEKL) is disordered.

The protein belongs to the methyltransferase superfamily. RsmH family.

It localises to the cytoplasm. It catalyses the reaction cytidine(1402) in 16S rRNA + S-adenosyl-L-methionine = N(4)-methylcytidine(1402) in 16S rRNA + S-adenosyl-L-homocysteine + H(+). Functionally, specifically methylates the N4 position of cytidine in position 1402 (C1402) of 16S rRNA. The chain is Ribosomal RNA small subunit methyltransferase H from Thermoanaerobacter sp. (strain X514).